Consider the following 1199-residue polypeptide: DNA polymerase beta (1199 aa).

This sequence belongs to the DNA polymerase type-B family.

It carries out the reaction DNA(n) + a 2'-deoxyribonucleoside 5'-triphosphate = DNA(n+1) + diphosphate. In terms of biological role, DNA-directed DNA polymerase involved in viral DNA replication. In Ornithodoros (relapsing fever ticks), this protein is DNA polymerase beta.